The primary structure comprises 110 residues: Phosphoribosyl-ATP pyrophosphatase (110 aa).

This sequence belongs to the PRA-PH family.

The protein localises to the cytoplasm. It catalyses the reaction 1-(5-phospho-beta-D-ribosyl)-ATP + H2O = 1-(5-phospho-beta-D-ribosyl)-5'-AMP + diphosphate + H(+). Its pathway is amino-acid biosynthesis; L-histidine biosynthesis; L-histidine from 5-phospho-alpha-D-ribose 1-diphosphate: step 2/9. The polypeptide is Phosphoribosyl-ATP pyrophosphatase (Pseudomonas fluorescens (strain Pf0-1)).